The following is a 366-amino-acid chain: DNA-directed RNA polymerase subunit alpha (366 aa).

The tract at residues 1–260 (MAISDNGGGS…DQLQSFIGSE (260 aa)) is alpha N-terminal domain (alpha-NTD). The tract at residues 274 to 366 (EGALPYDHNL…ENLSKQYSED (93 aa)) is alpha C-terminal domain (alpha-CTD).

The protein belongs to the RNA polymerase alpha chain family. In terms of assembly, homodimer. The RNAP catalytic core consists of 2 alpha, 1 beta, 1 beta' and 1 omega subunit. When a sigma factor is associated with the core the holoenzyme is formed, which can initiate transcription.

It carries out the reaction RNA(n) + a ribonucleoside 5'-triphosphate = RNA(n+1) + diphosphate. Functionally, DNA-dependent RNA polymerase catalyzes the transcription of DNA into RNA using the four ribonucleoside triphosphates as substrates. In Anaplasma marginale (strain St. Maries), this protein is DNA-directed RNA polymerase subunit alpha.